The chain runs to 1185 residues: MQLKSLEISGFKSFADKTKIDFQAGMTGIVGPNGSGKSNIIEAIRWVLGEQAVKSLRGTKMTDVIFAGSANRKPLNMAKVTITFDNSDHFLPLDYAEVSITRKLFRNGDSDYLINNQSCRLKDITNLMIDTGLGKDSFSVISQGRVEAVFNAKPEERRSIIEDVAGVLKYKKDKFTTENKLAETTDYLDRVNDIIAELNQQKGPLEEQASLARDYQDQKQKFDYLDRSRLVKKLTIARDQLQGVNEKLASAKALVAKYQQQVDAGATKLANLKTQQTAQLKQKDELVAQNLELIKTIENTQGQQGVDAERRQNQQSEQERLTASLTATEQQIATQTEQQTQLEQTLSEQQAQVKAVKAQVAELTTATSAAGRQQLADELEKLRNAYIDEKQVQAELNNEAKNLVKQHQQSGSQSTALAERLAQAQANLKRVQTTVDVHNREQRDLENQVSQQQATLTAQQAQVKTNAERIDEQQQRWLDAAGLMQREKSRLEALQAVQERYTNFYAGVRMVLQHRQQFSGVAGAVSELLTVPDQYTKAVEVALGGQLQNIVCDTQQTAKTVVNFLKQNHAGRATFLPIERITARQLPVNTERDLSQQPGVLGVASELVDCESRLTAIKRYLLGTTAIVDTLDHAMAISRSRRFRCKLVTIDGETIAASGAITGGATRHDDNGLLQQQQSAEKIAANVAQMQSELVTYEQGLADLKKANQDLTVQVETTRQQLSELKDRLSQTQAQLQAAQSEQTQLSRQVKALTYEQQQTQADDSYEDLVARNQQAQAANAAKLKDYQDQMKTVQQQQTDYESYQQTQTTKLQAQREQLITLQEHVKQTQRQLEQCQATLAQNEETKKQIQADLTAIKTTLASQQMSVAERDTVLKTAKAKQAAVEEQRKTCEQQLATLNDQVEELSTQQVRLQQLAAAATDDYRRLELSQTKLTGEVDHATADLAEKYQLTVAAAQADVSGLALPAITEQLKLLKRGLDEIGTVNLGAIDEFERVKERFDFLNNQASDLTEAKEHLLQTMADLDTTVATRFKTAFDQVASEFSTIFEQMFGGGKAELILTDPEHLLTSGVDIMAQPPGKKFQRLSLLSGGERALTAITLLFAILAVRPVPFSILDEAEAALDDANVDRFSQYLNDFQTGTQFVIITHRKGTMMHADVLYGVTMEESGVSKMVSVSLADLKDEQK.

Pro-32–Asn-39 contacts ATP. Positions Ser-228 to Asn-503 form a coiled coil. The disordered stretch occupies residues Thr-300–Ala-323. Residues Asp-307–Arg-320 show a composition bias toward basic and acidic residues. The region spanning Ser-519–Ile-637 is the SMC hinge domain. Coiled-coil stretches lie at residues Gln-675–Glu-928 and Ala-989–Asp-1025.

Belongs to the SMC family. In terms of assembly, homodimer.

The protein localises to the cytoplasm. Required for chromosome condensation and partitioning. The sequence is that of Chromosome partition protein Smc from Lactiplantibacillus plantarum (strain ATCC BAA-793 / NCIMB 8826 / WCFS1) (Lactobacillus plantarum).